The chain runs to 399 residues: 1-deoxy-D-xylulose 5-phosphate reductoisomerase (399 aa).

NADPH contacts are provided by Thr13, Gly14, Ser15, Ile16, and Asn127. Lys128 contributes to the 1-deoxy-D-xylulose 5-phosphate binding site. Glu129 provides a ligand contact to NADPH. Residue Asp153 coordinates Mn(2+). Positions 154, 155, 187, and 210 each coordinate 1-deoxy-D-xylulose 5-phosphate. Residue Glu155 coordinates Mn(2+). Gly216 is a binding site for NADPH. Positions 223, 228, 229, and 232 each coordinate 1-deoxy-D-xylulose 5-phosphate. Glu232 is a Mn(2+) binding site.

This sequence belongs to the DXR family. Mg(2+) serves as cofactor. The cofactor is Mn(2+).

It carries out the reaction 2-C-methyl-D-erythritol 4-phosphate + NADP(+) = 1-deoxy-D-xylulose 5-phosphate + NADPH + H(+). It participates in isoprenoid biosynthesis; isopentenyl diphosphate biosynthesis via DXP pathway; isopentenyl diphosphate from 1-deoxy-D-xylulose 5-phosphate: step 1/6. Catalyzes the NADPH-dependent rearrangement and reduction of 1-deoxy-D-xylulose-5-phosphate (DXP) to 2-C-methyl-D-erythritol 4-phosphate (MEP). This chain is 1-deoxy-D-xylulose 5-phosphate reductoisomerase, found in Bordetella parapertussis (strain 12822 / ATCC BAA-587 / NCTC 13253).